Reading from the N-terminus, the 638-residue chain is 1-deoxy-D-xylulose-5-phosphate synthase (638 aa).

Thiamine diphosphate is bound by residues histidine 78 and 119-121 (AHS). Position 150 (aspartate 150) interacts with Mg(2+). Residues 151–152 (GS), asparagine 179, tyrosine 288, and glutamate 370 contribute to the thiamine diphosphate site. Residue asparagine 179 coordinates Mg(2+).

It belongs to the transketolase family. DXPS subfamily. Homodimer. Requires Mg(2+) as cofactor. Thiamine diphosphate is required as a cofactor.

It carries out the reaction D-glyceraldehyde 3-phosphate + pyruvate + H(+) = 1-deoxy-D-xylulose 5-phosphate + CO2. The protein operates within metabolic intermediate biosynthesis; 1-deoxy-D-xylulose 5-phosphate biosynthesis; 1-deoxy-D-xylulose 5-phosphate from D-glyceraldehyde 3-phosphate and pyruvate: step 1/1. Functionally, catalyzes the acyloin condensation reaction between C atoms 2 and 3 of pyruvate and glyceraldehyde 3-phosphate to yield 1-deoxy-D-xylulose-5-phosphate (DXP). The protein is 1-deoxy-D-xylulose-5-phosphate synthase of Brucella anthropi (strain ATCC 49188 / DSM 6882 / CCUG 24695 / JCM 21032 / LMG 3331 / NBRC 15819 / NCTC 12168 / Alc 37) (Ochrobactrum anthropi).